Consider the following 228-residue polypeptide: ATP-dependent dethiobiotin synthetase BioD (228 aa).

12–17 (EIGKTT) provides a ligand contact to ATP. Residue T16 participates in Mg(2+) binding. K37 is an active-site residue. S41 is a substrate binding site. Residues D54, 116–119 (EGAG), and 205–207 (PRL) each bind ATP. Mg(2+)-binding residues include D54 and E116.

Belongs to the dethiobiotin synthetase family. As to quaternary structure, homodimer. Requires Mg(2+) as cofactor.

It is found in the cytoplasm. The enzyme catalyses (7R,8S)-7,8-diammoniononanoate + CO2 + ATP = (4R,5S)-dethiobiotin + ADP + phosphate + 3 H(+). Its pathway is cofactor biosynthesis; biotin biosynthesis; biotin from 7,8-diaminononanoate: step 1/2. Functionally, catalyzes a mechanistically unusual reaction, the ATP-dependent insertion of CO2 between the N7 and N8 nitrogen atoms of 7,8-diaminopelargonic acid (DAPA, also called 7,8-diammoniononanoate) to form a ureido ring. This is ATP-dependent dethiobiotin synthetase BioD from Pseudomonas aeruginosa (strain UCBPP-PA14).